The chain runs to 190 residues: Scytalone dehydratase-like protein Arp1 (190 aa).

Residue Tyr67 participates in substrate binding. Active-site residues include His102 and His127. Asn148 is a binding site for substrate.

The protein belongs to the scytalone dehydratase family. In terms of assembly, homotrimer. Each subunit contains an active site, located in the central part of the hydrophobic core of the monomer, which functions independently.

Scytalone dehydratase-like protein; part of the Pks2 gene cluster that mediates the formation of infectious structures (appressoria), enabling these fungi to kill insects faster. The product of the Pks2 gene cluster is different from the one of Pks1 and has still not been identified. This is Scytalone dehydratase-like protein Arp1 from Metarhizium anisopliae (strain ARSEF 549).